A 96-amino-acid chain; its full sequence is Co-chaperonin GroES (96 aa).

The protein belongs to the GroES chaperonin family. As to quaternary structure, heptamer of 7 subunits arranged in a ring. Interacts with the chaperonin GroEL.

The protein resides in the cytoplasm. Functionally, together with the chaperonin GroEL, plays an essential role in assisting protein folding. The GroEL-GroES system forms a nano-cage that allows encapsulation of the non-native substrate proteins and provides a physical environment optimized to promote and accelerate protein folding. GroES binds to the apical surface of the GroEL ring, thereby capping the opening of the GroEL channel. In Haemophilus influenzae (strain PittGG), this protein is Co-chaperonin GroES.